A 100-amino-acid chain; its full sequence is Integration host factor subunit alpha (100 aa).

The disordered stretch occupies residues F53–I72.

Belongs to the bacterial histone-like protein family. Heterodimer of an alpha and a beta chain.

In terms of biological role, this protein is one of the two subunits of integration host factor, a specific DNA-binding protein that functions in genetic recombination as well as in transcriptional and translational control. This chain is Integration host factor subunit alpha, found in Marinobacter nauticus (strain ATCC 700491 / DSM 11845 / VT8) (Marinobacter aquaeolei).